Consider the following 271-residue polypeptide: 4-hydroxy-tetrahydrodipicolinate reductase (271 aa).

Residues 11–16 (GAAGRM), Glu37, 102–104 (GTT), and 126–129 (AGNM) each bind NAD(+). His159 (proton donor/acceptor) is an active-site residue. Residue His160 coordinates (S)-2,3,4,5-tetrahydrodipicolinate. Lys163 acts as the Proton donor in catalysis. 169–170 (GT) is a (S)-2,3,4,5-tetrahydrodipicolinate binding site.

This sequence belongs to the DapB family.

It localises to the cytoplasm. The enzyme catalyses (S)-2,3,4,5-tetrahydrodipicolinate + NAD(+) + H2O = (2S,4S)-4-hydroxy-2,3,4,5-tetrahydrodipicolinate + NADH + H(+). It catalyses the reaction (S)-2,3,4,5-tetrahydrodipicolinate + NADP(+) + H2O = (2S,4S)-4-hydroxy-2,3,4,5-tetrahydrodipicolinate + NADPH + H(+). The protein operates within amino-acid biosynthesis; L-lysine biosynthesis via DAP pathway; (S)-tetrahydrodipicolinate from L-aspartate: step 4/4. Its function is as follows. Catalyzes the conversion of 4-hydroxy-tetrahydrodipicolinate (HTPA) to tetrahydrodipicolinate. This chain is 4-hydroxy-tetrahydrodipicolinate reductase, found in Parvibaculum lavamentivorans (strain DS-1 / DSM 13023 / NCIMB 13966).